The primary structure comprises 219 residues: Ribosome maturation factor RimP (219 aa).

The tract at residues 195–219 (EGRIPGDDLGAEPEDAASTETQEKK) is disordered.

The protein belongs to the RimP family.

The protein localises to the cytoplasm. Its function is as follows. Required for maturation of 30S ribosomal subunits. This chain is Ribosome maturation factor RimP, found in Brucella melitensis biotype 2 (strain ATCC 23457).